We begin with the raw amino-acid sequence, 241 residues long: Nuclear receptor-interacting protein 3 (241 aa).

This chain is Nuclear receptor-interacting protein 3 (NRIP3), found in Homo sapiens (Human).